A 271-amino-acid polypeptide reads, in one-letter code: 3-methyl-2-oxobutanoate hydroxymethyltransferase (271 aa).

Asp51 and Asp90 together coordinate Mg(2+). Residues 51-52 (DS), Asp90, and Lys118 contribute to the 3-methyl-2-oxobutanoate site. Glu120 serves as a coordination point for Mg(2+). The active-site Proton acceptor is Glu186.

Belongs to the PanB family. In terms of assembly, homodecamer; pentamer of dimers. Requires Mg(2+) as cofactor.

It localises to the cytoplasm. It carries out the reaction 3-methyl-2-oxobutanoate + (6R)-5,10-methylene-5,6,7,8-tetrahydrofolate + H2O = 2-dehydropantoate + (6S)-5,6,7,8-tetrahydrofolate. The protein operates within cofactor biosynthesis; (R)-pantothenate biosynthesis; (R)-pantoate from 3-methyl-2-oxobutanoate: step 1/2. Functionally, catalyzes the reversible reaction in which hydroxymethyl group from 5,10-methylenetetrahydrofolate is transferred onto alpha-ketoisovalerate to form ketopantoate. The protein is 3-methyl-2-oxobutanoate hydroxymethyltransferase of Xanthomonas campestris pv. campestris (strain B100).